Here is a 209-residue protein sequence, read N- to C-terminus: Probable calcium-binding protein CML36 (209 aa).

Residues 22–59 (SKSPTAFSFGSASSSSGQDCKNSGGDGGGGSVTPTSIL) are disordered. The segment covering 27–38 (AFSFGSASSSSG) has biased composition (low complexity). 4 EF-hand domains span residues 66–101 (YSYV…LGPD), 103–138 (LTEE…LDPA), 139–174 (RDST…IGDE), and 176–209 (CTLD…DLQR). The Ca(2+) site is built by Asp-79, Asp-81, Asp-83, and Asp-90. Ca(2+) is bound by residues Asp-152, Asp-154, Asp-156, Glu-163, Asp-189, Asp-191, Asp-193, and Glu-200.

Its function is as follows. Potential calcium sensor. This chain is Probable calcium-binding protein CML36 (CML36), found in Arabidopsis thaliana (Mouse-ear cress).